A 497-amino-acid polypeptide reads, in one-letter code: Glutamyl-tRNA reductase (497 aa).

Substrate-binding positions include 58-61 (TCNR), Ser-118, 123-125 (EQQ), and Gln-129. Catalysis depends on Cys-59, which acts as the Nucleophile. Position 214–219 (214–219 (GAGAMA)) interacts with NADP(+). Residues 461–477 (VTQPGQADSSAAQTAGT) are compositionally biased toward polar residues. The disordered stretch occupies residues 461–486 (VTQPGQADSSAAQTAGTSARADQIPS).

Belongs to the glutamyl-tRNA reductase family. Homodimer.

The catalysed reaction is (S)-4-amino-5-oxopentanoate + tRNA(Glu) + NADP(+) = L-glutamyl-tRNA(Glu) + NADPH + H(+). Its pathway is porphyrin-containing compound metabolism; protoporphyrin-IX biosynthesis; 5-aminolevulinate from L-glutamyl-tRNA(Glu): step 1/2. In terms of biological role, catalyzes the NADPH-dependent reduction of glutamyl-tRNA(Glu) to glutamate 1-semialdehyde (GSA). The sequence is that of Glutamyl-tRNA reductase from Corynebacterium jeikeium (strain K411).